Consider the following 300-residue polypeptide: MRSLVAQEKFRNIGLIARSESEQALYSLRQLIHFLHGRDCTVILDKHIIGHLPEMGLQAASASQMGEACDLVIVVGGDGSLLGAARTLARYKVPVLGVNRGHLGFLTDILPSEIESRVGQVLDGEYSTEKRFLLDLEVRRGRTVVGEGSALNDIVLLSGDSVHMIDFELMIDGHFVYGQRSDGLIVSTPTGSTAYALSGGGPIMHPKLDAMVLVPLNPHTLTSRPLVVAGDSEIKIHITTEKVRPLVSCDGTEGIRLQVDDVIAIRKKPHRLHLIHPPGHDFYQACRSKLGWSSRPGDNN.

Aspartate 78 acts as the Proton acceptor in catalysis. NAD(+) is bound by residues aspartate 78–glycine 79, asparagine 152–aspartate 153, histidine 163, arginine 180, aspartate 182, and threonine 193–serine 198.

This sequence belongs to the NAD kinase family. The cofactor is a divalent metal cation.

It localises to the cytoplasm. The catalysed reaction is NAD(+) + ATP = ADP + NADP(+) + H(+). Its function is as follows. Involved in the regulation of the intracellular balance of NAD and NADP, and is a key enzyme in the biosynthesis of NADP. Catalyzes specifically the phosphorylation on 2'-hydroxyl of the adenosine moiety of NAD to yield NADP. This chain is NAD kinase, found in Alcanivorax borkumensis (strain ATCC 700651 / DSM 11573 / NCIMB 13689 / SK2).